The primary structure comprises 416 residues: Protein PBN1 (416 aa).

The Lumenal segment spans residues 1–385; sequence MVTRHRVTVL…PDTKDYSKIK (385 aa). Residues N24, N85, N120, N212, and N365 are each glycosylated (N-linked (GlcNAc...) asparagine). Residues 386 to 405 form a helical; Signal-anchor for type III membrane protein membrane-spanning segment; it reads NGTLLCLLISIIYIFSKVFG. Over 406–416 the chain is Cytoplasmic; that stretch reads NNKKKRSVKRE.

This sequence belongs to the PIGX family. In terms of processing, N-glycosylated.

It is found in the endoplasmic reticulum membrane. Its pathway is glycolipid biosynthesis; glycosylphosphatidylinositol-anchor biosynthesis. Required for proper folding and/or the stability of a subset of proteins in the endoplasmic reticulum. Aids the autocatalytic processing of PRB1. Component of glycosylphosphatidylinositol-mannosyltransferase 1 which transfers the first of the 4 mannoses in the GPI-anchor precursors during GPI-anchor biosynthesis. Probably acts by stabilizing the mannosyltransferase GPI14. The sequence is that of Protein PBN1 (PBN1) from Saccharomyces cerevisiae (strain ATCC 204508 / S288c) (Baker's yeast).